Reading from the N-terminus, the 275-residue chain is Large ribosomal subunit protein uL2 (275 aa).

The disordered stretch occupies residues 222–257; sequence GTAMNAVDHPHGGGRGRSKGNNQPRSPWNQPAKGFK. Residues 240–250 are compositionally biased toward polar residues; sequence KGNNQPRSPWN.

It belongs to the universal ribosomal protein uL2 family. Part of the 50S ribosomal subunit. Forms a bridge to the 30S subunit in the 70S ribosome.

Its function is as follows. One of the primary rRNA binding proteins. Required for association of the 30S and 50S subunits to form the 70S ribosome, for tRNA binding and peptide bond formation. It has been suggested to have peptidyltransferase activity; this is somewhat controversial. Makes several contacts with the 16S rRNA in the 70S ribosome. The chain is Large ribosomal subunit protein uL2 from Endomicrobium trichonymphae.